A 1374-amino-acid chain; its full sequence is DNA-directed RNA polymerase subunit beta' (1374 aa).

The Zn(2+) site is built by C71, C73, C86, and C89. Mg(2+)-binding residues include D462, D464, and D466. Zn(2+)-binding residues include C810, C884, C891, and C894.

Belongs to the RNA polymerase beta' chain family. As to quaternary structure, the RNAP catalytic core consists of 2 alpha, 1 beta, 1 beta' and 1 omega subunit. When a sigma factor is associated with the core the holoenzyme is formed, which can initiate transcription. The cofactor is Mg(2+). Requires Zn(2+) as cofactor.

The enzyme catalyses RNA(n) + a ribonucleoside 5'-triphosphate = RNA(n+1) + diphosphate. DNA-dependent RNA polymerase catalyzes the transcription of DNA into RNA using the four ribonucleoside triphosphates as substrates. The polypeptide is DNA-directed RNA polymerase subunit beta' (Rickettsia massiliae (strain Mtu5)).